An 87-amino-acid chain; its full sequence is MNSLLIIAACLALIGTVWAKEGYIVNYHTGCKYECFKLGDNDYCLRECKLRHGKGSGGYCYAFGCWCTHLYEQAVVWPLPKKKCNGK.

The N-terminal stretch at 1–19 is a signal peptide; it reads MNSLLIIAACLALIGTVWA. The region spanning 20 to 85 is the LCN-type CS-alpha/beta domain; the sequence is KEGYIVNYHT…VWPLPKKKCN (66 aa). Disulfide bonds link Cys-31/Cys-84, Cys-35/Cys-60, Cys-44/Cys-65, and Cys-48/Cys-67. At Asn-85 the chain carries Asparagine amide.

The protein belongs to the long (4 C-C) scorpion toxin superfamily. Sodium channel inhibitor family. Beta subfamily. As to expression, expressed by the venom gland.

The protein resides in the secreted. Beta toxins bind voltage-independently at site-4 of sodium channels (Nav) and shift the voltage of activation toward more negative potentials thereby affecting sodium channel activation and promoting spontaneous and repetitive firing. The chain is Beta-toxin CsE3 from Centruroides sculpturatus (Arizona bark scorpion).